A 366-amino-acid polypeptide reads, in one-letter code: Zinc transporter ZIP13 (366 aa).

Over 1 to 5 the chain is Lumenal; the sequence is MTKQK. Residues 6 to 26 traverse the membrane as a helical segment; the sequence is LLLNGTFSLILIVACEAQQLP. Residues 27 to 57 lie on the Cytoplasmic side of the membrane; sequence RSHAASSSGPLCEKEAESWGNLLSSERLDAW. A helical transmembrane segment spans residues 58-78; sequence ICSLIGSFMVGLSGIFPLLVI. Residues 79 to 97 lie on the Lumenal side of the membrane; sequence PFETGAALRSEAGSRRLKQ. A helical transmembrane segment spans residues 98 to 118; sequence LLSFAIGGLLGNVFLHLLPEA. Residues 119 to 137 lie on the Cytoplasmic side of the membrane; that stretch reads WAYTCSAAAGEGQSFQQQK. A helical transmembrane segment spans residues 138-158; it reads LLGLWVIIGFLTFLALEKIFL. At 159–225 the chain is on the lumenal side; that stretch reads EKEEEECPGV…NRIKISGYLN (67 aa). Residues 183–205 form a disordered region; that stretch reads SGYPPSKVAGKSQRAEKNSTQCN. A helical membrane pass occupies residues 226 to 246; that stretch reads LLANTIDNFTHGLAVAASFLV. Over 247–282 the chain is Cytoplasmic; the sequence is SRKVGFLTTMAILLHEIPHEVGDFAILLRAGFDRWS. The short motif at 261 to 266 is the XEXPHE-motif element; that stretch reads HEIPHE. The helical transmembrane segment at 283-303 threads the bilayer; that stretch reads AAKMQLSTALGGIVGACFAIC. Over 304–313 the chain is Lumenal; that stretch reads AQSPKGAGET. The chain crosses the membrane as a helical span at residues 314 to 334; it reads VAWILPFTSGGFLYIALVNVV. Topologically, residues 335-343 are cytoplasmic; sequence PDLLEEKNP. A helical membrane pass occupies residues 344 to 364; it reads WNSLQQILLLCTGITVMVLLA. Residues 365-366 lie on the Lumenal side of the membrane; sequence HN.

It belongs to the ZIP transporter (TC 2.A.5) family. As to quaternary structure, homodimer.

It is found in the golgi apparatus membrane. Its subcellular location is the cytoplasmic vesicle membrane. The protein localises to the endoplasmic reticulum membrane. It carries out the reaction Zn(2+)(in) = Zn(2+)(out). Functionally, functions as a zinc transporter transporting Zn(2+) from the Golgi apparatus to the cytosol and thus influences the zinc level at least in areas of the cytosol. The chain is Zinc transporter ZIP13 from Gallus gallus (Chicken).